The sequence spans 105 residues: U-scoloptoxin(05)-Ssd1a (105 aa).

An N-terminal signal peptide occupies residues 1–24 (MKEAVKMSCLCIFVFLFLFSLTDA). The segment at 79-105 (HVPESNQKDGKVSTHMSSCNTDGCNAN) is disordered. The span at 92–105 (THMSSCNTDGCNAN) shows a compositional bias: polar residues.

The protein belongs to the scoloptoxin-05 family. Contains 4 disulfide bonds. In terms of tissue distribution, expressed by the venom gland.

The protein resides in the secreted. The chain is U-scoloptoxin(05)-Ssd1a from Scolopendra dehaani (Thai centipede).